The sequence spans 1059 residues: Zinc finger protein 658 (1059 aa).

The 72-residue stretch at 8–79 folds into the KRAB domain; it reads VSFQDVTVEF…EDEFLNQRYP (72 aa). Residue Lys-178 forms a Glycyl lysine isopeptide (Lys-Gly) (interchain with G-Cter in SUMO2) linkage. The C2H2-type 1; degenerate zinc finger occupies 325–347; sequence FESNKCEENFSQSSAHIVHQKTQ. The segment at 352–375 adopts a C2H2-type 2; degenerate zinc-finger fold; that stretch reads FGEHNECTDALYQKLDFTAHQRIH. A C2H2-type 3; degenerate zinc finger spans residues 381–406; it reads YLSDEHGKCRKSFYRKAHLIQHQRPH. A C2H2-type 4; degenerate zinc finger spans residues 412-434; the sequence is YQYEECAKSFCSSSHPIQHPGTY. 14 C2H2-type zinc fingers span residues 440 to 462, 518 to 540, 546 to 568, 574 to 596, 602 to 624, 630 to 652, 658 to 680, 686 to 708, 714 to 736, 742 to 764, 770 to 792, 798 to 820, 826 to 848, and 854 to 876; these read YECN…LRIH, YECI…QRIH, YECV…QRVH, YECN…QRIH, YECS…HRIH, YECS…QRIH, YECN…QNIH, YECS…RRIH, YECS…ERIH, and YECN…HRIH. The segment at 882-904 adopts a C2H2-type 19; degenerate zinc-finger fold; that stretch reads YECNDCGKTFSKTSHLRAHLRTR. 5 C2H2-type zinc fingers span residues 910 to 932, 938 to 960, 966 to 988, 994 to 1016, and 1022 to 1045; these read YECS…QRVH, YECN…QRIH, and YECD…TRMH.

This sequence belongs to the krueppel C2H2-type zinc-finger protein family.

The protein localises to the nucleus. Its function is as follows. Mediates transcriptional repression in response to zinc. Represses several genes, including SLC30A5, SLC30A10 and CBWD1, by binding to the zinc transcriptional regulatory element (ZTRE) (5'-C[AC]C[TAG]CC[TC]-N(0-50)-[GA]G[ATC]G[TG]G-3') found in the promoter region. May play a role in the control of ribosome biogenesis, regulating predominantly rRNA levels, as well as those of several ribosomal proteins, thus coordinating this highly zinc-demanding process with the available zinc supply. In Homo sapiens (Human), this protein is Zinc finger protein 658 (ZNF658).